Here is a 272-residue protein sequence, read N- to C-terminus: Dermonecrotic toxin SpeSicTox-betaIB1b (272 aa).

H5 is a catalytic residue. Mg(2+)-binding residues include E25 and D27. The active-site Nucleophile is H41. 2 disulfides stabilise this stretch: C45–C51 and C47–C191. D85 contributes to the Mg(2+) binding site.

Belongs to the arthropod phospholipase D family. Class II subfamily. Mg(2+) serves as cofactor. In terms of tissue distribution, expressed by the venom gland.

The protein localises to the secreted. The catalysed reaction is an N-(acyl)-sphingosylphosphocholine = an N-(acyl)-sphingosyl-1,3-cyclic phosphate + choline. It carries out the reaction an N-(acyl)-sphingosylphosphoethanolamine = an N-(acyl)-sphingosyl-1,3-cyclic phosphate + ethanolamine. It catalyses the reaction a 1-acyl-sn-glycero-3-phosphocholine = a 1-acyl-sn-glycero-2,3-cyclic phosphate + choline. The enzyme catalyses a 1-acyl-sn-glycero-3-phosphoethanolamine = a 1-acyl-sn-glycero-2,3-cyclic phosphate + ethanolamine. Dermonecrotic toxins cleave the phosphodiester linkage between the phosphate and headgroup of certain phospholipids (sphingolipid and lysolipid substrates), forming an alcohol (often choline) and a cyclic phosphate. This toxin acts on sphingomyelin (SM). It may also act on ceramide phosphoethanolamine (CPE), lysophosphatidylcholine (LPC) and lysophosphatidylethanolamine (LPE), but not on lysophosphatidylserine (LPS), and lysophosphatidylglycerol (LPG). It acts by transphosphatidylation, releasing exclusively cyclic phosphate products as second products. Induces dermonecrosis, hemolysis, increased vascular permeability, edema, inflammatory response, and platelet aggregation. The polypeptide is Dermonecrotic toxin SpeSicTox-betaIB1b (Sicarius peruensis (Six-eyed sand spider)).